Here is a 473-residue protein sequence, read N- to C-terminus: MKILYSLRRFYHVETLFNGTFVLAGRDQETTGFPWWAGNARLINLSGKLLGAHVAHAGLIVFWAGAMNLFEVAHFVPEKPMYEQGLILLPHLATLGWGVGSGGEVLDTFPYFVSGVLHLISSAVLGFGGIYHALLGPETLEESFPFFGYVWQDRNKMTTLLGIHLILLGLGAFLLVLKALYFGGVYDTWAPGGGDVRKITNLTLSPGVIFGYLLKSPFGGEGWIVSVDDLEDIIGGHVWLGSICVLGGIWHILTKPFAWARRAFVWSGEAYLSYSLGALSVFGFIACCFVWFNNTAYPSEFYGPTGPEASQAQAFTFLVRDQRLGANVGSAQGPTGLGKYLMRSPTGEVIFGGETMRFWDLRAPWLEPLRGPNGLDLSRLKKDGQPWQERRSGEYMTHAPLGSLNSVGGVATEINAVNYVSPRSWLATSHFVLGFFFFVGHLWHAGRARAAAAGFEKGIDRDLEPVVYMTPLN.

The propeptide occupies 1–14; it reads MKILYSLRRFYHVE. Residue Thr15 is modified to N-acetylthreonine. A Phosphothreonine modification is found at Thr15. The next 5 helical transmembrane spans lie at 69–93, 134–155, 178–200, 255–275, and 291–312; these read LFEV…PHLA, LLGP…QDRN, KALY…RKIT, KPFA…LSYS, and WFNN…ASQA. Glu367 is a binding site for [CaMn4O5] cluster. The chain crosses the membrane as a helical span at residues 447–471; it reads RARAAAAGFEKGIDRDLEPVVYMTP.

This sequence belongs to the PsbB/PsbC family. PsbC subfamily. As to quaternary structure, PSII is composed of 1 copy each of membrane proteins PsbA, PsbB, PsbC, PsbD, PsbE, PsbF, PsbH, PsbI, PsbJ, PsbK, PsbL, PsbM, PsbT, PsbX, PsbY, PsbZ, Psb30/Ycf12, at least 3 peripheral proteins of the oxygen-evolving complex and a large number of cofactors. It forms dimeric complexes. Binds multiple chlorophylls and provides some of the ligands for the Ca-4Mn-5O cluster of the oxygen-evolving complex. It may also provide a ligand for a Cl- that is required for oxygen evolution. PSII binds additional chlorophylls, carotenoids and specific lipids. serves as cofactor. Phosphorylated in both bundle sheath and mesophyll cells, phosphorylation increases when cells are grown under high rather than low light regimes (70 vs 900 umol photons/m-2/s).

Its subcellular location is the plastid. It localises to the chloroplast thylakoid membrane. One of the components of the core complex of photosystem II (PSII). It binds chlorophyll and helps catalyze the primary light-induced photochemical processes of PSII. PSII is a light-driven water:plastoquinone oxidoreductase, using light energy to abstract electrons from H(2)O, generating O(2) and a proton gradient subsequently used for ATP formation. The polypeptide is Photosystem II CP43 reaction center protein (Zea mays (Maize)).